Reading from the N-terminus, the 274-residue chain is Thiamine kinase (274 aa).

This sequence belongs to the thiamine kinase family.

It catalyses the reaction thiamine + ATP = thiamine phosphate + ADP + H(+). It participates in cofactor biosynthesis; thiamine diphosphate biosynthesis; thiamine phosphate from thiamine: step 1/1. Catalyzes the ATP-dependent phosphorylation of thiamine to thiamine phosphate. Is involved in thiamine salvage. In Escherichia coli O81 (strain ED1a), this protein is Thiamine kinase.